The primary structure comprises 206 residues: Large ribosomal subunit protein bL25 (206 aa).

The interval 1-91 is bL25 domain; the sequence is MEYRLKAYYR…RPEHVDFFVL (91 aa). The tract at residues 92–206 is CTC domain; sequence SDEPVEMYVP…IKKGKEEEEE (115 aa). Residues 184–206 form a disordered region; the sequence is AEEAAAEVAEPEVIKKGKEEEEE. The segment covering 195–206 has biased composition (basic and acidic residues); it reads EVIKKGKEEEEE.

It belongs to the bacterial ribosomal protein bL25 family. CTC subfamily. Part of the 50S ribosomal subunit. Contacts the 5S rRNA.

Its function is as follows. This is one of 3 proteins that mediate the attachment of the 5S rRNA onto the large ribosomal subunit. This Thermus thermophilus protein is Large ribosomal subunit protein bL25 (rplY).